The chain runs to 324 residues: Beta-ketoacyl-[acyl-carrier-protein] synthase III (324 aa).

Residues Cys-114 and His-251 contribute to the active site. Residues 252 to 256 (QANLR) are ACP-binding. Asn-281 is an active-site residue.

This sequence belongs to the thiolase-like superfamily. FabH family. In terms of assembly, homodimer.

The protein localises to the cytoplasm. The enzyme catalyses malonyl-[ACP] + acetyl-CoA + H(+) = 3-oxobutanoyl-[ACP] + CO2 + CoA. It functions in the pathway lipid metabolism; fatty acid biosynthesis. In terms of biological role, catalyzes the condensation reaction of fatty acid synthesis by the addition to an acyl acceptor of two carbons from malonyl-ACP. Catalyzes the first condensation reaction which initiates fatty acid synthesis and may therefore play a role in governing the total rate of fatty acid production. Possesses both acetoacetyl-ACP synthase and acetyl transacylase activities. Its substrate specificity determines the biosynthesis of branched-chain and/or straight-chain of fatty acids. This Dinoroseobacter shibae (strain DSM 16493 / NCIMB 14021 / DFL 12) protein is Beta-ketoacyl-[acyl-carrier-protein] synthase III.